Reading from the N-terminus, the 463-residue chain is MTDKTSNQMWGGRFAAGPDAIMEAINASIGFDKRLAAQDIAGSRAHAAMLAATGVITDSDAEAIREGLLTVLSEIEAGEFTFSTALEDIHMNVEARLKEIIGEPAGRLHTARSRNDQVATDFKLWVRDQFDAAEAGLLALLRALLGQAEAGADWVMPGFTHLQTAQPVTWGHHMMAYVEMFGRDLSRVRDARARMNESPLGSAALAGTSFPIDRHMTAAALGFDRPTANSLDAVSDRDFALEFLSVASICAMHLSRFAEELVIWSSAQFRFVTLSDRFSTGSSIMPQKKNPDAAELIRAKVGRIFGANTALMMVMKGLPLAYSKDMQEDKEQVFDAADNWMLALAAMEGMVRDMTANRDSLAAAAGSGFSTATDLADWLVRVLGLPFRDAHHVTGALVALAESKGCDLPDLSLDEMQSAHAAITEDVYGVLGVENSVNSRQSYGGTAPAQVRAQVARWKEMLA.

It belongs to the lyase 1 family. Argininosuccinate lyase subfamily.

The protein localises to the cytoplasm. The enzyme catalyses 2-(N(omega)-L-arginino)succinate = fumarate + L-arginine. The protein operates within amino-acid biosynthesis; L-arginine biosynthesis; L-arginine from L-ornithine and carbamoyl phosphate: step 3/3. The sequence is that of Argininosuccinate lyase from Ruegeria pomeroyi (strain ATCC 700808 / DSM 15171 / DSS-3) (Silicibacter pomeroyi).